The sequence spans 332 residues: UDP-3-O-acylglucosamine N-acyltransferase (332 aa).

Histidine 231 functions as the Proton acceptor in the catalytic mechanism.

The protein belongs to the transferase hexapeptide repeat family. LpxD subfamily. As to quaternary structure, homotrimer.

It carries out the reaction a UDP-3-O-[(3R)-3-hydroxyacyl]-alpha-D-glucosamine + a (3R)-hydroxyacyl-[ACP] = a UDP-2-N,3-O-bis[(3R)-3-hydroxyacyl]-alpha-D-glucosamine + holo-[ACP] + H(+). The protein operates within bacterial outer membrane biogenesis; LPS lipid A biosynthesis. In terms of biological role, catalyzes the N-acylation of UDP-3-O-acylglucosamine using 3-hydroxyacyl-ACP as the acyl donor. Is involved in the biosynthesis of lipid A, a phosphorylated glycolipid that anchors the lipopolysaccharide to the outer membrane of the cell. This Vesicomyosocius okutanii subsp. Calyptogena okutanii (strain HA) protein is UDP-3-O-acylglucosamine N-acyltransferase.